Here is a 305-residue protein sequence, read N- to C-terminus: Glycine--tRNA ligase alpha subunit (305 aa).

It belongs to the class-II aminoacyl-tRNA synthetase family. Tetramer of two alpha and two beta subunits.

It is found in the cytoplasm. The enzyme catalyses tRNA(Gly) + glycine + ATP = glycyl-tRNA(Gly) + AMP + diphosphate. In Streptococcus pyogenes serotype M4 (strain MGAS10750), this protein is Glycine--tRNA ligase alpha subunit.